The primary structure comprises 208 residues: GTP cyclohydrolase 1 (208 aa).

Zn(2+) is bound by residues Cys89, His92, and Cys163.

The protein belongs to the GTP cyclohydrolase I family. As to quaternary structure, homomer.

It carries out the reaction GTP + H2O = 7,8-dihydroneopterin 3'-triphosphate + formate + H(+). It participates in cofactor biosynthesis; 7,8-dihydroneopterin triphosphate biosynthesis; 7,8-dihydroneopterin triphosphate from GTP: step 1/1. The protein is GTP cyclohydrolase 1 of Saccharolobus islandicus (strain L.S.2.15 / Lassen #1) (Sulfolobus islandicus).